Consider the following 192-residue polypeptide: GTP cyclohydrolase-2 (192 aa).

47-51 contributes to the GTP binding site; the sequence is RIHSE. 3 residues coordinate Zn(2+): Cys-52, Cys-63, and Cys-65. Residues Gln-68, 90-92, and Thr-112 contribute to the GTP site; that span reads EGR. Residue Asp-124 is the Proton acceptor of the active site. Arg-126 functions as the Nucleophile in the catalytic mechanism. Positions 147 and 152 each coordinate GTP.

It belongs to the GTP cyclohydrolase II family. Zn(2+) serves as cofactor.

The enzyme catalyses GTP + 4 H2O = 2,5-diamino-6-hydroxy-4-(5-phosphoribosylamino)-pyrimidine + formate + 2 phosphate + 3 H(+). The protein operates within cofactor biosynthesis; riboflavin biosynthesis; 5-amino-6-(D-ribitylamino)uracil from GTP: step 1/4. Its function is as follows. Catalyzes the conversion of GTP to 2,5-diamino-6-ribosylamino-4(3H)-pyrimidinone 5'-phosphate (DARP), formate and pyrophosphate. This Picrophilus torridus (strain ATCC 700027 / DSM 9790 / JCM 10055 / NBRC 100828 / KAW 2/3) protein is GTP cyclohydrolase-2.